A 282-amino-acid polypeptide reads, in one-letter code: Probable endonuclease 4 (282 aa).

9 residues coordinate Zn(2+): histidine 69, histidine 109, glutamate 145, aspartate 179, histidine 182, histidine 216, aspartate 229, histidine 231, and glutamate 261.

This sequence belongs to the AP endonuclease 2 family. Zn(2+) serves as cofactor.

It carries out the reaction Endonucleolytic cleavage to 5'-phosphooligonucleotide end-products.. Functionally, endonuclease IV plays a role in DNA repair. It cleaves phosphodiester bonds at apurinic or apyrimidinic (AP) sites, generating a 3'-hydroxyl group and a 5'-terminal sugar phosphate. This Campylobacter hominis (strain ATCC BAA-381 / DSM 21671 / CCUG 45161 / LMG 19568 / NCTC 13146 / CH001A) protein is Probable endonuclease 4.